The sequence spans 317 residues: ADP-L-glycero-D-manno-heptose-6-epimerase (317 aa).

NADP(+) is bound by residues 10-11 (FI), 31-32 (DD), lysine 38, lysine 53, 75-79 (QGACS), and asparagine 92. Tyrosine 139 serves as the catalytic Proton acceptor. An NADP(+)-binding site is contributed by lysine 143. Asparagine 166 is a substrate binding site. 2 residues coordinate NADP(+): valine 167 and lysine 175. Residue lysine 175 is the Proton acceptor of the active site. Substrate contacts are provided by residues glycine 177, histidine 184, 198-201 (FQGH), arginine 211, and tyrosine 275.

Belongs to the NAD(P)-dependent epimerase/dehydratase family. HldD subfamily. As to quaternary structure, homopentamer. NADP(+) is required as a cofactor.

It carries out the reaction ADP-D-glycero-beta-D-manno-heptose = ADP-L-glycero-beta-D-manno-heptose. It participates in nucleotide-sugar biosynthesis; ADP-L-glycero-beta-D-manno-heptose biosynthesis; ADP-L-glycero-beta-D-manno-heptose from D-glycero-beta-D-manno-heptose 7-phosphate: step 4/4. Catalyzes the interconversion between ADP-D-glycero-beta-D-manno-heptose and ADP-L-glycero-beta-D-manno-heptose via an epimerization at carbon 6 of the heptose. In Shewanella loihica (strain ATCC BAA-1088 / PV-4), this protein is ADP-L-glycero-D-manno-heptose-6-epimerase.